A 603-amino-acid chain; its full sequence is Terpenoid synthase 25 (603 aa).

5 residues coordinate Mg(2+): D356, D360, N500, T504, and E508. A DDXXD motif motif is present at residues 356 to 360 (DDTCD).

Belongs to the terpene synthase family. Tpsa subfamily. The cofactor is Mg(2+). Mn(2+) is required as a cofactor. In terms of tissue distribution, predominantly expressed in roots but also in flowers.

The protein resides in the cytoplasm. It functions in the pathway secondary metabolite biosynthesis; terpenoid biosynthesis. Involved in terpene biosynthesis in roots. Possesses sesquiterpene (C15) synthase activity in vitro. Does not seem to be involved in diterpene (C20) biosynthesis. This is Terpenoid synthase 25 from Arabidopsis thaliana (Mouse-ear cress).